A 426-amino-acid chain; its full sequence is 3-phosphoshikimate 1-carboxyvinyltransferase (426 aa).

Positions 22, 23, and 27 each coordinate 3-phosphoshikimate. K22 provides a ligand contact to phosphoenolpyruvate. G96 and R124 together coordinate phosphoenolpyruvate. S170, S171, Q172, S198, D314, N337, and K341 together coordinate 3-phosphoshikimate. Q172 is a binding site for phosphoenolpyruvate. D314 acts as the Proton acceptor in catalysis. R345, R387, and K412 together coordinate phosphoenolpyruvate.

It belongs to the EPSP synthase family. In terms of assembly, monomer.

The protein localises to the cytoplasm. The catalysed reaction is 3-phosphoshikimate + phosphoenolpyruvate = 5-O-(1-carboxyvinyl)-3-phosphoshikimate + phosphate. The protein operates within metabolic intermediate biosynthesis; chorismate biosynthesis; chorismate from D-erythrose 4-phosphate and phosphoenolpyruvate: step 6/7. In terms of biological role, catalyzes the transfer of the enolpyruvyl moiety of phosphoenolpyruvate (PEP) to the 5-hydroxyl of shikimate-3-phosphate (S3P) to produce enolpyruvyl shikimate-3-phosphate and inorganic phosphate. This chain is 3-phosphoshikimate 1-carboxyvinyltransferase, found in Photobacterium damsela subsp. piscicida (Pasteurella piscicida).